The following is a 281-amino-acid chain: Pantothenate synthetase (281 aa).

Residue 30 to 37 participates in ATP binding; that stretch reads MGYLHEGH. Catalysis depends on histidine 37, which acts as the Proton donor. Glutamine 61 is a binding site for (R)-pantoate. A beta-alanine-binding site is contributed by glutamine 61. Residue 147–150 coordinates ATP; the sequence is GEKD. Glutamine 153 provides a ligand contact to (R)-pantoate. ATP contacts are provided by residues isoleucine 176 and 184–187; that span reads KSSR.

The protein belongs to the pantothenate synthetase family. As to quaternary structure, homodimer.

It localises to the cytoplasm. The enzyme catalyses (R)-pantoate + beta-alanine + ATP = (R)-pantothenate + AMP + diphosphate + H(+). The protein operates within cofactor biosynthesis; (R)-pantothenate biosynthesis; (R)-pantothenate from (R)-pantoate and beta-alanine: step 1/1. Catalyzes the condensation of pantoate with beta-alanine in an ATP-dependent reaction via a pantoyl-adenylate intermediate. The chain is Pantothenate synthetase from Clostridium botulinum (strain 657 / Type Ba4).